A 5202-amino-acid polypeptide reads, in one-letter code: Usherin (5202 aa).

The N-terminal stretch at 1–31 (MNCPVLSLGSGFLFQVIEMLIFAYFASISLT) is a signal peptide. At 32–5042 (ESRGLFPRLE…KSTEFYSELW (5011 aa)) the chain is on the extracellular side. One can recognise a Laminin N-terminal domain in the interval 271 to 517 (QDFRLYQVAL…AVDEITISGR (247 aa)). N-linked (GlcNAc...) asparagine glycans are attached at residues asparagine 361 and asparagine 451. Intrachain disulfides connect cysteine 518/cysteine 527, cysteine 520/cysteine 536, cysteine 538/cysteine 549, cysteine 552/cysteine 572, cysteine 575/cysteine 584, cysteine 577/cysteine 605, cysteine 608/cysteine 617, cysteine 620/cysteine 638, cysteine 641/cysteine 655, cysteine 643/cysteine 662, cysteine 664/cysteine 673, cysteine 676/cysteine 691, cysteine 694/cysteine 708, cysteine 696/cysteine 715, cysteine 717/cysteine 726, cysteine 729/cysteine 744, cysteine 747/cysteine 759, cysteine 749/cysteine 766, cysteine 768/cysteine 777, cysteine 780/cysteine 792, cysteine 795/cysteine 808, cysteine 797/cysteine 815, cysteine 817/cysteine 826, cysteine 829/cysteine 844, cysteine 847/cysteine 861, cysteine 849/cysteine 868, cysteine 870/cysteine 879, cysteine 882/cysteine 897, cysteine 900/cysteine 913, cysteine 902/cysteine 920, cysteine 922/cysteine 931, cysteine 934/cysteine 948, cysteine 951/cysteine 963, cysteine 953/cysteine 970, cysteine 972/cysteine 982, cysteine 985/cysteine 999, cysteine 1002/cysteine 1014, cysteine 1004/cysteine 1021, cysteine 1023/cysteine 1032, and cysteine 1035/cysteine 1050. Laminin EGF-like domains lie at 518 to 574 (CQCH…NCKP), 575 to 640 (CQCN…VCKP), 641 to 693 (CDCD…GCSP), 694 to 746 (CNCN…GCEP), 747 to 794 (CQCN…NCKA), 795 to 846 (CDCD…LCLP), 847 to 899 (CNCD…HCQM), 900 to 950 (CECD…GCLP), 951 to 1001 (CSCH…RCQP), and 1002 to 1052 (CNCH…GCSK). Asparagine 587 and asparagine 611 each carry an N-linked (GlcNAc...) asparagine glycan. Asparagine 650 carries an N-linked (GlcNAc...) asparagine glycan. N-linked (GlcNAc...) asparagine glycosylation occurs at asparagine 697. Asparagine 839, asparagine 856, and asparagine 862 each carry an N-linked (GlcNAc...) asparagine glycan. An N-linked (GlcNAc...) asparagine glycan is attached at asparagine 888. Residue asparagine 944 is glycosylated (N-linked (GlcNAc...) asparagine). A glycan (N-linked (GlcNAc...) asparagine) is linked at asparagine 1011. Fibronectin type-III domains are found at residues 1058 to 1146 (PPPR…TKPG), 1148 to 1244 (PEGN…APPQ), 1245 to 1363 (RLSP…SAPV), and 1364 to 1468 (FMIP…AAPA). N-linked (GlcNAc...) asparagine glycosylation is found at asparagine 1071, asparagine 1151, and asparagine 1174. N-linked (GlcNAc...) asparagine glycosylation is found at asparagine 1379, asparagine 1388, asparagine 1479, and asparagine 1635. 2 consecutive Laminin G-like domains span residues 1517–1709 (MKGI…WEGC) and 1714–1891 (NEGA…LDGC). A disulfide bridge links cysteine 1672 with cysteine 1709. N-linked (GlcNAc...) asparagine glycosylation occurs at asparagine 1779. An intrachain disulfide couples cysteine 1862 to cysteine 1891. 14 Fibronectin type-III domains span residues 1869-1955 (TRGA…AAPQ), 1957-2054 (VPTP…TPQE), 2055-2144 (APQE…LPPE), 2145-2239 (HVDS…TDED), 2243-2330 (GVPA…APPE), 2331-2433 (GTVN…MPPG), 2437-2531 (GVLP…TAED), 2535-2622 (PVVP…TLPG), 2624-2722 (PEGI…TRPS), 2726-2819 (GVQP…THPT), 2820-2923 (VPQN…TLAG), 2927-3018 (RGAN…TCDG), 3022-3112 (GMLP…TPSD), and 3113-3209 (IPTP…CCEE). 14 N-linked (GlcNAc...) asparagine glycosylation sites follow: asparagine 1903, asparagine 2011, asparagine 2014, asparagine 2048, asparagine 2130, asparagine 2182, asparagine 2195, asparagine 2258, asparagine 2285, asparagine 2322, asparagine 2377, asparagine 2382, asparagine 2407, and asparagine 2413. Asparagine 2581, asparagine 2584, asparagine 2656, asparagine 2710, asparagine 2770, and asparagine 2788 each carry an N-linked (GlcNAc...) asparagine glycan. Residues asparagine 2930, asparagine 2937, asparagine 2970, asparagine 3032, and asparagine 3099 are each glycosylated (N-linked (GlcNAc...) asparagine). Residues asparagine 3217, asparagine 3330, asparagine 3419, and asparagine 3433 are each glycosylated (N-linked (GlcNAc...) asparagine). 2 disulfides stabilise this stretch: cysteine 3371–cysteine 3444 and cysteine 3399–cysteine 3425. Fibronectin type-III domains lie at 3403–3497 (CPAS…TKED), 3501–3589 (GVSP…TQGV), 3592–3682 (SILP…AAPE), 3684–3770 (VWVT…TPMS), 3774–3865 (EIYP…TPEA), 3866–3963 (APMD…TLEA), 3964–4067 (PPQD…SSPS), 4068–4153 (GLRN…TDEA), 4157–4261 (SQLA…TLQA), 4262–4357 (PPEG…AAPS), 4358–4445 (EVSP…ALPE), 4446–4530 (NMDS…TSPS), 4534–4630 (GMEP…TPEI), 4636–4733 (PPPH…TGPA), 4734–4827 (PPEG…THPA), and 4828–4927 (PPSG…SFTT). N-linked (GlcNAc...) asparagine glycans are attached at residues asparagine 3653, asparagine 3694, asparagine 3733, asparagine 3780, and asparagine 3849. An N-linked (GlcNAc...) asparagine glycan is attached at asparagine 3984. Asparagine 4202, asparagine 4226, asparagine 4317, and asparagine 4418 each carry an N-linked (GlcNAc...) asparagine glycan. A disordered region spans residues 4518-4541 (ILSPLVKDRTSPSAPSGMEPPKLQ). Residues asparagine 4564, asparagine 4583, asparagine 4691, asparagine 4754, and asparagine 4800 are each glycosylated (N-linked (GlcNAc...) asparagine). Residues asparagine 4943 and asparagine 4950 are each glycosylated (N-linked (GlcNAc...) asparagine). Residues 5043 to 5063 (FIVLMAMLGLILLAIFLSLIL) form a helical membrane-spanning segment. At 5064–5202 (QRKIHKEPYI…ERTTFTDTHL (139 aa)) the chain is on the cytoplasmic side. Positions 5200-5202 (THL) match the PDZ-binding motif.

As to quaternary structure, interacts with collagen IV and fibronectin via its laminin EGF-like domains. Interaction with collagen may be required for stable integration into the basement membrane. Interacts with NINL. Interacts with USH1C. Component of USH2 complex, composed of ADGRV1, PDZD7, USH2A and WHRN. Interacts with ADGRV1/MASS1 (via N-terminal PDZ domain). Interacts (via the cytoplasmic region) with WHRN. Interacts (via the cytoplasmic region) with PDZD7. Interacts (via the cytoplasmic region) with VEZT and MYO7A (via MyTH4-FERM domains); the interaction associates VEZT with the USH2 complex at the stereocilia base. As to expression, present in the basement membrane of many, but not all tissues. Expressed in retina, cochlea, small and large intestine, pancreas, bladder, prostate, esophagus, trachea, thymus, salivary glands, placenta, ovary, fallopian tube, uterus and testis. Absent in many other tissues such as heart, lung, liver, kidney and brain. In the retina, it is present in the basement membranes in the Bruch's layer choroid capillary basement membranes, where it localizes just beneath the retinal pigment epithelial cells (at protein level). Weakly expressed. Isoform 2 is expressed in fetal eye, cochlea and heart, and at very low level in brain, CNS, intestine, skeleton, tongue, kidney and lung. Isoform 2 is not expressed in stomach and liver. In adult tissues, isoform 2 is expressed in neural retina and testis, and at low level in brain, heart, kidney and liver. Isoform 1 displays a similar pattern of expression but is expressed at very low level in fetal cochlea.

Its subcellular location is the cell projection. The protein resides in the stereocilium membrane. It is found in the secreted. Functionally, involved in hearing and vision as member of the USH2 complex. In the inner ear, required for the maintenance of the hair bundle ankle formation, which connects growing stereocilia in developing cochlear hair cells. In retina photoreceptors, the USH2 complex is required for the maintenance of periciliary membrane complex that seems to play a role in regulating intracellular protein transport. The sequence is that of Usherin (USH2A) from Homo sapiens (Human).